The sequence spans 255 residues: Hydroxyacylglutathione hydrolase (255 aa).

7 residues coordinate Zn(2+): His-56, His-58, Asp-60, His-61, His-114, Asp-133, and His-171.

Belongs to the metallo-beta-lactamase superfamily. Glyoxalase II family. In terms of assembly, monomer. Requires Zn(2+) as cofactor.

It catalyses the reaction an S-(2-hydroxyacyl)glutathione + H2O = a 2-hydroxy carboxylate + glutathione + H(+). The protein operates within secondary metabolite metabolism; methylglyoxal degradation; (R)-lactate from methylglyoxal: step 2/2. Thiolesterase that catalyzes the hydrolysis of S-D-lactoyl-glutathione to form glutathione and D-lactic acid. This Cereibacter sphaeroides (strain ATCC 17023 / DSM 158 / JCM 6121 / CCUG 31486 / LMG 2827 / NBRC 12203 / NCIMB 8253 / ATH 2.4.1.) (Rhodobacter sphaeroides) protein is Hydroxyacylglutathione hydrolase.